The primary structure comprises 160 residues: Cytochrome b6-f complex subunit 4 (160 aa).

3 helical membrane passes run 36 to 56, 95 to 115, and 131 to 151; these read LLYIFPVVIFGTFACCIGLAV, LLGVLAMAAVPVGLLTVPFIE, and ILFLVGTLVAVWLGIGATFPI.

This sequence belongs to the cytochrome b family. PetD subfamily. As to quaternary structure, the 4 large subunits of the cytochrome b6-f complex are cytochrome b6, subunit IV (17 kDa polypeptide, petD), cytochrome f and the Rieske protein, while the 4 small subunits are petG, petL, petM and petN. The complex functions as a dimer.

It is found in the plastid. It localises to the chloroplast thylakoid membrane. Functionally, component of the cytochrome b6-f complex, which mediates electron transfer between photosystem II (PSII) and photosystem I (PSI), cyclic electron flow around PSI, and state transitions. In Chlamydomonas moewusii (Chlamydomonas eugametos), this protein is Cytochrome b6-f complex subunit 4.